The sequence spans 375 residues: Dual-specificity RNA methyltransferase RlmN (375 aa).

Glu94 (proton acceptor) is an active-site residue. The Radical SAM core domain occupies 100–339 (EDDRATLCVS…VTVRKTRGDD (240 aa)). Cys107 and Cys344 are oxidised to a cystine. [4Fe-4S] cluster-binding residues include Cys114, Cys118, and Cys121. Residues 168–169 (GE), Ser200, 222–224 (SLH), and Asn301 contribute to the S-adenosyl-L-methionine site. Cys344 serves as the catalytic S-methylcysteine intermediate.

Belongs to the radical SAM superfamily. RlmN family. Requires [4Fe-4S] cluster as cofactor.

The protein resides in the cytoplasm. The catalysed reaction is adenosine(2503) in 23S rRNA + 2 reduced [2Fe-2S]-[ferredoxin] + 2 S-adenosyl-L-methionine = 2-methyladenosine(2503) in 23S rRNA + 5'-deoxyadenosine + L-methionine + 2 oxidized [2Fe-2S]-[ferredoxin] + S-adenosyl-L-homocysteine. It carries out the reaction adenosine(37) in tRNA + 2 reduced [2Fe-2S]-[ferredoxin] + 2 S-adenosyl-L-methionine = 2-methyladenosine(37) in tRNA + 5'-deoxyadenosine + L-methionine + 2 oxidized [2Fe-2S]-[ferredoxin] + S-adenosyl-L-homocysteine. Functionally, specifically methylates position 2 of adenine 2503 in 23S rRNA and position 2 of adenine 37 in tRNAs. m2A2503 modification seems to play a crucial role in the proofreading step occurring at the peptidyl transferase center and thus would serve to optimize ribosomal fidelity. This is Dual-specificity RNA methyltransferase RlmN from Vibrio campbellii (strain ATCC BAA-1116).